The primary structure comprises 100 residues: Noncompact myelin-associated protein (100 aa).

The Extracellular segment spans residues 1 to 28 (MTTATTLGDAVFSLNMTRGEDALYKSSG). A helical transmembrane segment spans residues 29–49 (AIVAAIVVVVIIIVTLVLILL). Residues 50–100 (KMYNRRMRTRRELEPKSPKPPVPPALDPSSNGSQQPATVTFDPANVHVETR) lie on the Cytoplasmic side of the membrane. The interval 58–100 (TRRELEPKSPKPPVPPALDPSSNGSQQPATVTFDPANVHVETR) is disordered.

Post-translationally, glycosylated. As to expression, found in the peripheral nervous system (PNS) Schwann cells (at protein level). Expressed in the PNS, primarily limited to Schwann cells.

Its subcellular location is the cell membrane. Its function is as follows. Plays a role in myelin formation. The polypeptide is Noncompact myelin-associated protein (Ncmap) (Mus musculus (Mouse)).